The sequence spans 952 residues: Leucine--tRNA ligase (952 aa).

The short motif at 66–77 is the 'HIGH' region element; it reads PYPSGAGLHVGH. The short motif at 722 to 726 is the 'KMSKS' region element; the sequence is KMGKS. Lysine 725 is a binding site for ATP.

This sequence belongs to the class-I aminoacyl-tRNA synthetase family.

The protein resides in the cytoplasm. It catalyses the reaction tRNA(Leu) + L-leucine + ATP = L-leucyl-tRNA(Leu) + AMP + diphosphate. This is Leucine--tRNA ligase from Corynebacterium glutamicum (strain ATCC 13032 / DSM 20300 / JCM 1318 / BCRC 11384 / CCUG 27702 / LMG 3730 / NBRC 12168 / NCIMB 10025 / NRRL B-2784 / 534).